The sequence spans 134 residues: UPF0357 protein YCL012C (134 aa).

An N-terminal signal peptide occupies residues 1-23 (MKSLFYLKLLLWVVLLSLCLLMA). Ser71 and Ser74 each carry phosphoserine. Lys86 is covalently cross-linked (Glycyl lysine isopeptide (Lys-Gly) (interchain with G-Cter in ubiquitin)).

Belongs to the UPF0357 family.

The polypeptide is UPF0357 protein YCL012C (Saccharomyces cerevisiae (strain ATCC 204508 / S288c) (Baker's yeast)).